Reading from the N-terminus, the 331-residue chain is MAAIFSLFLFFILFIVSLLIILSFIVRPRSVTIPIKFRHVFITGGSSGIGLALAHRAVSEGAKVSILARSTEKLAEAKRSIQLATGVEVATFSADVRDYDAVSKAIDESGPIDVLIVNQGVFIGKELEKQSPEEVKFMIDVNLTGSFNVIKAALPAMKAREGRGPASISLVSSQAGQAGIYGYTAYSASKFGLQGLAQALQQEVISDGIHVTLLFPPDTDTPGFEQELKKRPELTSIIAASSGSMKTNEVAKICFDGIKAGKFTVTCHFIGFLLSIASTGMSPQGSFWLALTEVMFGGLIRLASLVFQWQWYKTIEKWSQRNKKEVNSKLA.

At 1–7 (MAAIFSL) the chain is on the lumenal side. The helical transmembrane segment at 8–28 (FLFFILFIVSLLIILSFIVRP) threads the bilayer. Residues 29-262 (RSVTIPIKFR…ICFDGIKAGK (234 aa)) are Cytoplasmic-facing. NADPH contacts are provided by G44, S46, S47, G48, R69, K73, and D95. Positions 44-48 (GGSSG) match the GXSXG motif. The active-site Proton donor is S172. The active-site Proton acceptor is the Y186. NADP(+) contacts are provided by Y186 and K190. The active-site Lowers pKa of active site Tyr is K190. A helical transmembrane segment spans residues 263 to 283 (FTVTCHFIGFLLSIASTGMSP). At 284 to 286 (QGS) the chain is on the lumenal side. The helical transmembrane segment at 287 to 307 (FWLALTEVMFGGLIRLASLVF) threads the bilayer. Residues 308–331 (QWQWYKTIEKWSQRNKKEVNSKLA) are Cytoplasmic-facing.

This sequence belongs to the short-chain dehydrogenases/reductases (SDR) family. As to expression, expressed in roots, leaves, stems and flowers.

It localises to the endoplasmic reticulum membrane. It catalyses the reaction sphinganine + NADP(+) = 3-oxosphinganine + NADPH + H(+). It functions in the pathway lipid metabolism; sphingolipid metabolism. Its function is as follows. Catalyzes the reduction of 3'-oxosphinganine (3-ketodihydrosphingosine/KDS) to sphinganine (dihydrosphingosine/DHS), the second step of de novo sphingolipid biosynthesis. In plants, sphingolipids seems to play a critical role in mineral ion homeostasis, most likely through their involvement in the ion transport functionalities of membrane systems in the root. Is stereospecific for D-erythro-DHS production and does not produce L-threo-DHS. The sequence is that of 3-dehydrosphinganine reductase TSC10B (TSC10B) from Arabidopsis thaliana (Mouse-ear cress).